We begin with the raw amino-acid sequence, 239 residues long: MAATLLAARGAGPAPAWGPEAFTPDWESREVSTGTTIMAVQFDGGVVLGADSRTTTGSYIANRVTDKLTPIHDRIFCCRSGSAADTQAVADAVTYQLGFHSIELNEPPLVHTAASLFKEMCYRYREDLMAGIIIAGWDPQEGGQVYSVPMGGMMVRQSFAIGGSGSSYIYGYVDATYREGMTKEECLQFTANALALAMERDGSSGGVIRLAAIAESGVERQVLLGDQIPKFAVATLPPA.

A2 is modified (N-acetylalanine). A propeptide spans 2–34 (AATLLAARGAGPAPAWGPEAFTPDWESREVSTG) (removed in mature form). The active-site Nucleophile is T35. T69 carries the post-translational modification Phosphothreonine.

Belongs to the peptidase T1B family. As to quaternary structure, the 26S proteasome consists of a 20S proteasome core and two 19S regulatory subunits. The 20S proteasome core is a barrel-shaped complex made of 28 subunits that are arranged in four stacked rings. The two outer rings are each formed by seven alpha subunits, and the two inner rings are formed by seven beta subunits. The proteolytic activity is exerted by three beta-subunits PSMB5, PSMB6 and PSMB7. In terms of assembly, (Microbial infection) Interacts with HIV-1 protein Tat.

It is found in the cytoplasm. The protein resides in the nucleus. The catalysed reaction is Cleavage of peptide bonds with very broad specificity.. In terms of biological role, component of the 20S core proteasome complex involved in the proteolytic degradation of most intracellular proteins. This complex plays numerous essential roles within the cell by associating with different regulatory particles. Associated with two 19S regulatory particles, forms the 26S proteasome and thus participates in the ATP-dependent degradation of ubiquitinated proteins. The 26S proteasome plays a key role in the maintenance of protein homeostasis by removing misfolded or damaged proteins that could impair cellular functions, and by removing proteins whose functions are no longer required. Associated with the PA200 or PA28, the 20S proteasome mediates ubiquitin-independent protein degradation. This type of proteolysis is required in several pathways including spermatogenesis (20S-PA200 complex) or generation of a subset of MHC class I-presented antigenic peptides (20S-PA28 complex). Within the 20S core complex, PSMB6 displays a peptidylglutamyl-hydrolizing activity also termed postacidic or caspase-like activity, meaning that the peptides bond hydrolysis occurs directly after acidic residues. The polypeptide is Proteasome subunit beta type-6 (Homo sapiens (Human)).